The following is a 632-amino-acid chain: PAN2-PAN3 deadenylation complex subunit PAN3 (632 aa).

Disordered stretches follow at residues methionine 1 to leucine 22 and proline 99 to leucine 127. Residues methionine 107–glutamine 116 show a composition bias toward basic residues. The span at serine 117–leucine 127 shows a compositional bias: polar residues. Residues lysine 223–glycine 494 are pseudokinase domain. Residues arginine 270, aspartate 321–threonine 328, and asparagine 397–lysine 398 contribute to the ATP site. Positions glycine 495–threonine 533 form a coiled coil. Positions valine 534–arginine 632 are knob domain.

Belongs to the protein kinase superfamily. PAN3 family. In terms of assembly, homodimer. Forms a heterotrimer with a catalytic subunit PAN2 to form the poly(A)-nuclease (PAN) deadenylation complex. Interacts (via PAM-2 motif) with poly(A)-binding protein (via PABC domain), conferring substrate specificity of the enzyme complex. Interacts with the GW182 family protein ain-1. As to expression, highly expressed in germ cells.

It localises to the cytoplasm. Its subcellular location is the P-body. Functionally, regulatory subunit of the poly(A)-nuclease (PAN) deadenylation complex, one of two cytoplasmic mRNA deadenylases involved in general and miRNA-mediated mRNA turnover. PAN specifically shortens poly(A) tails of RNA and the activity is stimulated by poly(A)-binding protein (PABP). PAN deadenylation is followed by rapid degradation of the shortened mRNA tails by the CCR4-NOT complex. Deadenylated mRNAs are then degraded by two alternative mechanisms, namely exosome-mediated 3'-5' exonucleolytic degradation, or deadenylation-dependent mRNA decaping and subsequent 5'-3' exonucleolytic degradation by XRN1. PAN3 acts as a positive regulator for PAN activity, recruiting the catalytic subunit PAN2 to mRNA via its interaction with RNA and PABP, and to miRNA targets via its interaction with GW182 family proteins. Within the PAN complex, may positively regulate fertility. The sequence is that of PAN2-PAN3 deadenylation complex subunit PAN3 from Caenorhabditis elegans.